The chain runs to 199 residues: NADH-quinone oxidoreductase subunit C (199 aa).

The protein belongs to the complex I 30 kDa subunit family. NDH-1 is composed of 14 different subunits. Subunits NuoB, C, D, E, F, and G constitute the peripheral sector of the complex.

It localises to the cell inner membrane. It catalyses the reaction a quinone + NADH + 5 H(+)(in) = a quinol + NAD(+) + 4 H(+)(out). NDH-1 shuttles electrons from NADH, via FMN and iron-sulfur (Fe-S) centers, to quinones in the respiratory chain. The immediate electron acceptor for the enzyme in this species is believed to be ubiquinone. Couples the redox reaction to proton translocation (for every two electrons transferred, four hydrogen ions are translocated across the cytoplasmic membrane), and thus conserves the redox energy in a proton gradient. The protein is NADH-quinone oxidoreductase subunit C of Cupriavidus metallidurans (strain ATCC 43123 / DSM 2839 / NBRC 102507 / CH34) (Ralstonia metallidurans).